Consider the following 1133-residue polypeptide: Lon protease homolog, mitochondrial (1133 aa).

The N-terminal 37 residues, 1 to 37 (MLRTRTTKTLSTVARTTRAIQYYRSIAKTAAVSQRRF), are a transit peptide targeting the mitochondrion. Positions 38–98 (ASTLTVRDVE…ATNSGKSILA (61 aa)) are cleaved as a propeptide — removed in mature form; by autocatalysis. Composition is skewed to basic and acidic residues over residues 98-117 (AKDD…VPDE) and 125-143 (EPTR…EASK). 2 disordered regions span residues 98–176 (AKDD…KDVP) and 282–358 (ELFP…LDDI). The span at 145–166 (SRSSASGGGQSSSSRSDSGDGS) shows a compositional bias: low complexity. Positions 182–480 (MLALPIARRP…KSLLVLKKEL (299 aa)) constitute a Lon N-terminal domain. Composition is skewed to basic and acidic residues over residues 282 to 301 (ELFP…KDTD) and 325 to 340 (KLED…SELQ). Residues 348–358 (TEEESEELDDI) are compositionally biased toward acidic residues. 632–639 (GPPGVGKT) contacts ATP. Residues 839 to 892 (KKLSIEDSPTSSADSKPKESVSSEEKAENNAKSSSEKTKDNNSEKTSDDIEALK) are dispensable for catalytic activity. The tract at residues 844-889 (EDSPTSSADSKPKESVSSEEKAENNAKSSSEKTKDNNSEKTSDDIE) is disordered. Positions 853-889 (SKPKESVSSEEKAENNAKSSSEKTKDNNSEKTSDDIE) are enriched in basic and acidic residues. Positions 923–1109 (TTPPGVVMGL…NDIFQKLFKD (187 aa)) constitute a Lon proteolytic domain. Active-site residues include Ser-1015 and Lys-1058.

The protein belongs to the peptidase S16 family. As to quaternary structure, homohexamer. Organized in a ring with a central cavity. The ATP-binding and proteolytic domains (AP-domain) form a hexameric chamber. Oligomerization is independent of its proteolytic activity and the autocatalytic maturation of its subunits.

The protein resides in the mitochondrion matrix. It carries out the reaction Hydrolysis of proteins in presence of ATP.. Functionally, ATP-dependent serine protease that mediates the selective degradation of misfolded, unassembled or oxidatively damaged polypeptides as well as certain short-lived regulatory proteins in the mitochondrial matrix. May also have a chaperone function in the assembly of inner membrane protein complexes. Participates in the regulation of mitochondrial gene expression and in the maintenance of the integrity of the mitochondrial genome. Binds to mitochondrial DNA in a site-specific manner. Endogenous substrates include ABF2, ACO2, ILV1, ILV2, LSC1, LYS4, MGM101 and several oxidized proteins. The 2 nucleic acid-binding proteins ABF2 and MGM101 are protected from degradation by PIM1 when they are bound to DNA. The chain is Lon protease homolog, mitochondrial from Saccharomyces cerevisiae (strain ATCC 204508 / S288c) (Baker's yeast).